We begin with the raw amino-acid sequence, 218 residues long: Probable nicotinate-nucleotide adenylyltransferase (218 aa).

The protein belongs to the NadD family.

The catalysed reaction is nicotinate beta-D-ribonucleotide + ATP + H(+) = deamido-NAD(+) + diphosphate. It participates in cofactor biosynthesis; NAD(+) biosynthesis; deamido-NAD(+) from nicotinate D-ribonucleotide: step 1/1. Functionally, catalyzes the reversible adenylation of nicotinate mononucleotide (NaMN) to nicotinic acid adenine dinucleotide (NaAD). This chain is Probable nicotinate-nucleotide adenylyltransferase, found in Halorhodospira halophila (strain DSM 244 / SL1) (Ectothiorhodospira halophila (strain DSM 244 / SL1)).